A 537-amino-acid chain; its full sequence is Tyrosine-protein kinase fyna (537 aa).

Residue Gly-2 is the site of N-myristoyl glycine attachment. S-palmitoyl cysteine attachment occurs at residues Cys-3 and Cys-6. Position 12 is a phosphothreonine; by PKC (Thr-12). Residues 13-34 (KLTDERETSVSQHAGYRYGSDP) form a disordered region. The SH3 domain maps to 82 to 143 (TGVTLFVALY…PSNYVAPVDS (62 aa)). The 98-residue stretch at 149–246 (WYFGKLGRKD…GLCCRLIVPC (98 aa)) folds into the SH2 domain. The 254-residue stretch at 271-524 (LQLIKRLGNG…YLQAFLEDYF (254 aa)) folds into the Protein kinase domain. ATP is bound by residues 277–285 (LGNGQFGEV) and Lys-299. Catalysis depends on Asp-390, which acts as the Proton acceptor. Tyr-420 is modified (phosphotyrosine; by autocatalysis). A Phosphotyrosine modification is found at Tyr-531.

The protein belongs to the protein kinase superfamily. Tyr protein kinase family. SRC subfamily. It depends on Mn(2+) as a cofactor. As to expression, widely expressed.

Its subcellular location is the cytoplasm. It localises to the nucleus. It carries out the reaction L-tyrosyl-[protein] + ATP = O-phospho-L-tyrosyl-[protein] + ADP + H(+). Its activity is regulated as follows. Inhibited by phosphorylation of Tyr-531 by leukocyte common antigen and activated by dephosphorylation of this site. Relatively inactive in the unfertilized oocyte, undergoes rapid activation immediately following fertilization. Total activity increases progressively during later development and remains elevated during sphere and epiboly stage. Functionally, tyrosine-protein kinase implicated in the control of cell growth. Plays a role in the regulation of intracellular calcium levels. Required in brain development and mature brain function with important roles in the regulation of axon growth, axon guidance, and neurite extension. Role in cntn1-mediated signaling. Required for convergent extension cell movements during gastrulation, acting with yes via rhoa. May be required for epiboly to occur, possibly through its effects in calcium signaling. The sequence is that of Tyrosine-protein kinase fyna (fyna) from Danio rerio (Zebrafish).